The chain runs to 165 residues: K(+)/H(+) antiporter subunit KhtT (165 aa).

Residues Leu-76–Ser-161 form the RCK C-terminal domain.

The transporter is composed of the integral membrane protein KhtU and the regulatory protein KhtT.

The protein localises to the cell membrane. Binds cyclic di-AMP (c-di-AMP), which may regulate the activity. Its function is as follows. Required for activity of the potassium/proton antiporter KhtU. Involved in protection of the cell from methylglyoxal, a toxic by-product of glycolysis. The protein is K(+)/H(+) antiporter subunit KhtT of Bacillus subtilis (strain 168).